We begin with the raw amino-acid sequence, 302 residues long: Ornithine carbamoyltransferase (302 aa).

Carbamoyl phosphate contacts are provided by residues 52–55, glutamine 79, arginine 103, and 130–133; these read STRT and HPCQ. L-ornithine is bound by residues asparagine 161, aspartate 221, and 225–226; that span reads SM. Residues 261 to 262 and arginine 289 contribute to the carbamoyl phosphate site; that span reads CL.

It belongs to the aspartate/ornithine carbamoyltransferase superfamily. OTCase family.

It localises to the cytoplasm. It catalyses the reaction carbamoyl phosphate + L-ornithine = L-citrulline + phosphate + H(+). Its pathway is amino-acid biosynthesis; L-arginine biosynthesis; L-arginine from L-ornithine and carbamoyl phosphate: step 1/3. Reversibly catalyzes the transfer of the carbamoyl group from carbamoyl phosphate (CP) to the N(epsilon) atom of ornithine (ORN) to produce L-citrulline. This Methanosarcina mazei (strain ATCC BAA-159 / DSM 3647 / Goe1 / Go1 / JCM 11833 / OCM 88) (Methanosarcina frisia) protein is Ornithine carbamoyltransferase.